A 241-amino-acid chain; its full sequence is Small ribosomal subunit protein uS2 (241 aa).

It belongs to the universal ribosomal protein uS2 family.

The chain is Small ribosomal subunit protein uS2 from Escherichia coli O127:H6 (strain E2348/69 / EPEC).